We begin with the raw amino-acid sequence, 195 residues long: 3-isopropylmalate dehydratase small subunit (195 aa).

Belongs to the LeuD family. LeuD type 1 subfamily. Heterodimer of LeuC and LeuD.

It catalyses the reaction (2R,3S)-3-isopropylmalate = (2S)-2-isopropylmalate. It functions in the pathway amino-acid biosynthesis; L-leucine biosynthesis; L-leucine from 3-methyl-2-oxobutanoate: step 2/4. Its function is as follows. Catalyzes the isomerization between 2-isopropylmalate and 3-isopropylmalate, via the formation of 2-isopropylmaleate. The chain is 3-isopropylmalate dehydratase small subunit from Karelsulcia muelleri (strain GWSS) (Sulcia muelleri).